We begin with the raw amino-acid sequence, 567 residues long: Urease subunit alpha (567 aa).

The 439-residue stretch at 129 to 567 (GGIDSHIHFI…LPMAQRYFLF (439 aa)) folds into the Urease domain. Residues His134, His136, and Lys217 each contribute to the Ni(2+) site. An N6-carboxylysine modification is found at Lys217. His219 contacts substrate. The Ni(2+) site is built by His246 and His272. His320 (proton donor) is an active-site residue. Asp360 lines the Ni(2+) pocket.

This sequence belongs to the metallo-dependent hydrolases superfamily. Urease alpha subunit family. Heterotrimer of UreA (gamma), UreB (beta) and UreC (alpha) subunits. Three heterotrimers associate to form the active enzyme. The cofactor is Ni cation. Post-translationally, carboxylation allows a single lysine to coordinate two nickel ions.

Its subcellular location is the cytoplasm. The enzyme catalyses urea + 2 H2O + H(+) = hydrogencarbonate + 2 NH4(+). It participates in nitrogen metabolism; urea degradation; CO(2) and NH(3) from urea (urease route): step 1/1. This Alcanivorax borkumensis (strain ATCC 700651 / DSM 11573 / NCIMB 13689 / SK2) protein is Urease subunit alpha.